The sequence spans 273 residues: Ribosomal RNA small subunit methyltransferase A (273 aa).

6 residues coordinate S-adenosyl-L-methionine: H10, L12, G37, E58, D83, and N108.

This sequence belongs to the class I-like SAM-binding methyltransferase superfamily. rRNA adenine N(6)-methyltransferase family. RsmA subfamily.

The protein localises to the cytoplasm. It carries out the reaction adenosine(1518)/adenosine(1519) in 16S rRNA + 4 S-adenosyl-L-methionine = N(6)-dimethyladenosine(1518)/N(6)-dimethyladenosine(1519) in 16S rRNA + 4 S-adenosyl-L-homocysteine + 4 H(+). In terms of biological role, specifically dimethylates two adjacent adenosines (A1518 and A1519) in the loop of a conserved hairpin near the 3'-end of 16S rRNA in the 30S particle. May play a critical role in biogenesis of 30S subunits. This chain is Ribosomal RNA small subunit methyltransferase A, found in Picosynechococcus sp. (strain ATCC 27264 / PCC 7002 / PR-6) (Agmenellum quadruplicatum).